Here is a 458-residue protein sequence, read N- to C-terminus: UPF0210 protein Mevan_0738 (458 aa).

Belongs to the UPF0210 family.

The polypeptide is UPF0210 protein Mevan_0738 (Methanococcus vannielii (strain ATCC 35089 / DSM 1224 / JCM 13029 / OCM 148 / SB)).